A 309-amino-acid chain; its full sequence is UDP-URONIC ACID TRANSPORTER 1 (309 aa).

Transmembrane regions (helical) follow at residues 9–29, 43–63, 78–98, 104–124, 131–151, 152–172, 193–213, 231–251, 256–278, and 283–302; these read TLFI…VLLL, IFLT…SIVF, FLKV…GNIS, VSFN…FAYL, AWVT…ASGG, EPGF…ARAF, LMLY…LFME, WILL…NFLV, SALT…SILI, and VTVM…VAYG.

The protein belongs to the TPT transporter family. TPT (TC 2.A.7.9) subfamily. Ubiquitous.

The protein resides in the golgi apparatus membrane. Functionally, UDP-glucuronic acid transporter that modulates the polysaccharide composition of seed mucilage. Transports UDP-glucuronic acid (UDP-GlcA) and UDP-galacturonic acid (UDP-GalA) in vitro. This is UDP-URONIC ACID TRANSPORTER 1 from Arabidopsis thaliana (Mouse-ear cress).